The chain runs to 277 residues: MRPLQEKIVAYEHVLPEIDPKKEIRKSIDFLKDYLKENPFLKTYVLGISGGQDSTLTGKLCQMAIEEMREETGNKSYQFIAVRLPYGVQADASDAADAIAFQKPDQDLIVNIKEPVDAMVKVVEATGQKITDFNKGNIKARQRMVVQYAIAGANNGAVVGTDHAAENFSGFYTKYGDGAADITPLFRLDKRQGKAMLKELGCPKHLYEKAPTADLEEDRPDLPDEVALGVTYKDVDDYLEGKDVSEEAAEQIEKLWKKSEHKRHLPVTIFDDFYKQN.

47-54 (GISGGQDS) contacts ATP. A Mg(2+)-binding site is contributed by aspartate 53. Arginine 141 contributes to the deamido-NAD(+) binding site. Threonine 161 provides a ligand contact to ATP. Position 166 (glutamate 166) interacts with Mg(2+). Residues lysine 174 and aspartate 181 each coordinate deamido-NAD(+). ATP contacts are provided by lysine 190 and threonine 212. 261 to 262 (HK) contributes to the deamido-NAD(+) binding site.

It belongs to the NAD synthetase family. In terms of assembly, homodimer.

It catalyses the reaction deamido-NAD(+) + NH4(+) + ATP = AMP + diphosphate + NAD(+) + H(+). The protein operates within cofactor biosynthesis; NAD(+) biosynthesis; NAD(+) from deamido-NAD(+) (ammonia route): step 1/1. Catalyzes the ATP-dependent amidation of deamido-NAD to form NAD. Uses ammonia as a nitrogen source. This Lactobacillus johnsonii (strain CNCM I-12250 / La1 / NCC 533) protein is NH(3)-dependent NAD(+) synthetase.